The primary structure comprises 248 residues: Pyridoxine 5'-phosphate synthase (248 aa).

Asparagine 12 serves as a coordination point for 3-amino-2-oxopropyl phosphate. 14 to 15 (DH) provides a ligand contact to 1-deoxy-D-xylulose 5-phosphate. 3-amino-2-oxopropyl phosphate is bound at residue arginine 23. Histidine 48 functions as the Proton acceptor in the catalytic mechanism. 2 residues coordinate 1-deoxy-D-xylulose 5-phosphate: arginine 50 and histidine 55. The active-site Proton acceptor is the glutamate 75. Threonine 105 serves as a coordination point for 1-deoxy-D-xylulose 5-phosphate. Histidine 199 acts as the Proton donor in catalysis. 3-amino-2-oxopropyl phosphate-binding positions include glycine 200 and 221–222 (GH).

Belongs to the PNP synthase family. As to quaternary structure, homooctamer; tetramer of dimers.

The protein resides in the cytoplasm. The catalysed reaction is 3-amino-2-oxopropyl phosphate + 1-deoxy-D-xylulose 5-phosphate = pyridoxine 5'-phosphate + phosphate + 2 H2O + H(+). Its pathway is cofactor biosynthesis; pyridoxine 5'-phosphate biosynthesis; pyridoxine 5'-phosphate from D-erythrose 4-phosphate: step 5/5. Its function is as follows. Catalyzes the complicated ring closure reaction between the two acyclic compounds 1-deoxy-D-xylulose-5-phosphate (DXP) and 3-amino-2-oxopropyl phosphate (1-amino-acetone-3-phosphate or AAP) to form pyridoxine 5'-phosphate (PNP) and inorganic phosphate. This is Pyridoxine 5'-phosphate synthase from Jannaschia sp. (strain CCS1).